We begin with the raw amino-acid sequence, 550 residues long: Dihydroxy-acid dehydratase (550 aa).

Residue Asp78 participates in Mg(2+) binding. Cys119 contacts [2Fe-2S] cluster. Residues Asp120 and Lys121 each coordinate Mg(2+). Residue Lys121 is modified to N6-carboxylysine. Cys191 serves as a coordination point for [2Fe-2S] cluster. Position 440 (Glu440) interacts with Mg(2+). Ser466 functions as the Proton acceptor in the catalytic mechanism.

It belongs to the IlvD/Edd family. As to quaternary structure, homodimer. Requires [2Fe-2S] cluster as cofactor. Mg(2+) is required as a cofactor.

The enzyme catalyses (2R)-2,3-dihydroxy-3-methylbutanoate = 3-methyl-2-oxobutanoate + H2O. It catalyses the reaction (2R,3R)-2,3-dihydroxy-3-methylpentanoate = (S)-3-methyl-2-oxopentanoate + H2O. It participates in amino-acid biosynthesis; L-isoleucine biosynthesis; L-isoleucine from 2-oxobutanoate: step 3/4. The protein operates within amino-acid biosynthesis; L-valine biosynthesis; L-valine from pyruvate: step 3/4. In terms of biological role, functions in the biosynthesis of branched-chain amino acids. Catalyzes the dehydration of (2R,3R)-2,3-dihydroxy-3-methylpentanoate (2,3-dihydroxy-3-methylvalerate) into 2-oxo-3-methylpentanoate (2-oxo-3-methylvalerate) and of (2R)-2,3-dihydroxy-3-methylbutanoate (2,3-dihydroxyisovalerate) into 2-oxo-3-methylbutanoate (2-oxoisovalerate), the penultimate precursor to L-isoleucine and L-valine, respectively. The chain is Dihydroxy-acid dehydratase from Methanococcus maripaludis (strain C7 / ATCC BAA-1331).